The following is a 178-amino-acid chain: uncharacterized protein (178 aa).

Residues 52-177 (HIAIEDRAHQ…RRLPASFLST (126 aa)) form the MSP domain.

This is an uncharacterized protein from Caenorhabditis elegans.